We begin with the raw amino-acid sequence, 217 residues long: Probable transaldolase (217 aa).

The Schiff-base intermediate with substrate role is filled by Lys-83.

Belongs to the transaldolase family. Type 3B subfamily.

The protein localises to the cytoplasm. The catalysed reaction is D-sedoheptulose 7-phosphate + D-glyceraldehyde 3-phosphate = D-erythrose 4-phosphate + beta-D-fructose 6-phosphate. The protein operates within carbohydrate degradation; pentose phosphate pathway; D-glyceraldehyde 3-phosphate and beta-D-fructose 6-phosphate from D-ribose 5-phosphate and D-xylulose 5-phosphate (non-oxidative stage): step 2/3. In terms of biological role, transaldolase is important for the balance of metabolites in the pentose-phosphate pathway. The polypeptide is Probable transaldolase (Caldicellulosiruptor saccharolyticus (strain ATCC 43494 / DSM 8903 / Tp8T 6331)).